The sequence spans 802 residues: Phenylalanine--tRNA ligase beta subunit (802 aa).

In terms of domain architecture, tRNA-binding spans 38-149; the sequence is KSSLKPFVIA…ADAPVGTSFA (112 aa). The B5 domain occupies 399–474; sequence HKPKIVSFPI…RIHGVDNIAP (76 aa). Mg(2+)-binding residues include D452, D458, E461, and E462. The region spanning 708–801 is the FDX-ACB domain; it reads SAFQAVKRDF…VGKQTGGVLR (94 aa).

It belongs to the phenylalanyl-tRNA synthetase beta subunit family. Type 1 subfamily. As to quaternary structure, tetramer of two alpha and two beta subunits. It depends on Mg(2+) as a cofactor.

Its subcellular location is the cytoplasm. It catalyses the reaction tRNA(Phe) + L-phenylalanine + ATP = L-phenylalanyl-tRNA(Phe) + AMP + diphosphate + H(+). The polypeptide is Phenylalanine--tRNA ligase beta subunit (Mesorhizobium japonicum (strain LMG 29417 / CECT 9101 / MAFF 303099) (Mesorhizobium loti (strain MAFF 303099))).